A 605-amino-acid chain; its full sequence is DNA mismatch repair protein MutL (605 aa).

Belongs to the DNA mismatch repair MutL/HexB family.

Functionally, this protein is involved in the repair of mismatches in DNA. It is required for dam-dependent methyl-directed DNA mismatch repair. May act as a 'molecular matchmaker', a protein that promotes the formation of a stable complex between two or more DNA-binding proteins in an ATP-dependent manner without itself being part of a final effector complex. The protein is DNA mismatch repair protein MutL of Sinorhizobium medicae (strain WSM419) (Ensifer medicae).